We begin with the raw amino-acid sequence, 176 residues long: Imidazoleglycerol-phosphate dehydratase (176 aa).

This sequence belongs to the imidazoleglycerol-phosphate dehydratase family.

The protein resides in the cytoplasm. It catalyses the reaction D-erythro-1-(imidazol-4-yl)glycerol 3-phosphate = 3-(imidazol-4-yl)-2-oxopropyl phosphate + H2O. It functions in the pathway amino-acid biosynthesis; L-histidine biosynthesis; L-histidine from 5-phospho-alpha-D-ribose 1-diphosphate: step 6/9. The polypeptide is Imidazoleglycerol-phosphate dehydratase (Pyrococcus furiosus (strain ATCC 43587 / DSM 3638 / JCM 8422 / Vc1)).